The primary structure comprises 360 residues: UDP-3-O-acylglucosamine N-acyltransferase (360 aa).

Catalysis depends on His-248, which acts as the Proton acceptor.

This sequence belongs to the transferase hexapeptide repeat family. LpxD subfamily. Homotrimer.

It carries out the reaction a UDP-3-O-[(3R)-3-hydroxyacyl]-alpha-D-glucosamine + a (3R)-hydroxyacyl-[ACP] = a UDP-2-N,3-O-bis[(3R)-3-hydroxyacyl]-alpha-D-glucosamine + holo-[ACP] + H(+). It functions in the pathway bacterial outer membrane biogenesis; LPS lipid A biosynthesis. Catalyzes the N-acylation of UDP-3-O-acylglucosamine using 3-hydroxyacyl-ACP as the acyl donor. Is involved in the biosynthesis of lipid A, a phosphorylated glycolipid that anchors the lipopolysaccharide to the outer membrane of the cell. This is UDP-3-O-acylglucosamine N-acyltransferase from Chlamydia pneumoniae (Chlamydophila pneumoniae).